Reading from the N-terminus, the 643-residue chain is MVAISLPDGSVRSYEGPVTGRQIAEDIGPGLAKAALAVTIDGTMKDLSVPITTDASVSLITARDAAALELLRHDAAHVMAQAVQELYPGTQVTIGPAIENGFYYDFARAEPFTPEDLERIEERMREIVGRDLPIVREVWERDEAIAYFTKLGETYKAELITGLPANEDVSVYRQGDWLDLCRGPHLPSTGKLGTAFKLMKLAGAYWRGDSRNPMLQRIYGTAWPDRKQLDAYLTMLAEAEKRDHRRVGQEMDLFHLQEEAQGAVFWHPKGWTVYRTLQNYMRRRLDLAGYVEVNTPMLVDRALWEKSGHWEKFRQNMFISEAEDKLLAMKPMNCPCHIQIFKQGIKSYRDLPLRMAEFGACHRNEASGALHGLMRVRAFVQDDAHIFCTEDQIVSETQAFCDLLKSVYRDLGFTEIKVKFSDRPEVRAGSDETWDKAEAALREATDAAGLEWTLNPGEGAFYGPKLEFVLRDAIGRDWQCGTLQVDFVLPERLGADYVGEDGDKHRPVMLHRAILGTFERFMGILIENCAGRFPFWLAPVQVVVATITSDADDYARTVLAALKAKGLRAVADLRNEKINYKVREHSLAKVPVMLVVGRKEAETGGVALRRLGGQSQEVLALDEAIATLANESVAPDLRAAPQG.

The TGS domain occupies 1 to 61; sequence MVAISLPDGS…TTDASVSLIT (61 aa). The catalytic stretch occupies residues 243–534; that stretch reads DHRRVGQEMD…LIENCAGRFP (292 aa). Residues Cys-334, His-385, and His-511 each contribute to the Zn(2+) site.

This sequence belongs to the class-II aminoacyl-tRNA synthetase family. As to quaternary structure, homodimer. Requires Zn(2+) as cofactor.

It is found in the cytoplasm. The catalysed reaction is tRNA(Thr) + L-threonine + ATP = L-threonyl-tRNA(Thr) + AMP + diphosphate + H(+). In terms of biological role, catalyzes the attachment of threonine to tRNA(Thr) in a two-step reaction: L-threonine is first activated by ATP to form Thr-AMP and then transferred to the acceptor end of tRNA(Thr). Also edits incorrectly charged L-seryl-tRNA(Thr). The sequence is that of Threonine--tRNA ligase from Rhodospirillum rubrum (strain ATCC 11170 / ATH 1.1.1 / DSM 467 / LMG 4362 / NCIMB 8255 / S1).